Reading from the N-terminus, the 122-residue chain is Large ribosomal subunit protein uL14 (122 aa).

This sequence belongs to the universal ribosomal protein uL14 family. Part of the 50S ribosomal subunit. Forms a cluster with proteins L3 and L19. In the 70S ribosome, L14 and L19 interact and together make contacts with the 16S rRNA in bridges B5 and B8.

In terms of biological role, binds to 23S rRNA. Forms part of two intersubunit bridges in the 70S ribosome. This is Large ribosomal subunit protein uL14 from Thermodesulfovibrio yellowstonii (strain ATCC 51303 / DSM 11347 / YP87).